The chain runs to 227 residues: Prolactin-4A1 (227 aa).

An N-terminal signal peptide occupies residues 1 to 31; sequence MHLSLTPQWSSWTVLLLLVSNLLLWENTASA. Cystine bridges form between cysteine 87-cysteine 203 and cysteine 220-cysteine 227. Residue asparagine 175 is glycosylated (N-linked (GlcNAc...) asparagine).

It belongs to the somatotropin/prolactin family. In terms of tissue distribution, expressed specifically in placenta. Expressed in both trophoblast giant cells and spongiotrophoblast cells.

The protein resides in the secreted. The polypeptide is Prolactin-4A1 (Prl4a1) (Mus musculus (Mouse)).